We begin with the raw amino-acid sequence, 177 residues long: Large ribosomal subunit protein uL6 (177 aa).

Belongs to the universal ribosomal protein uL6 family. Part of the 50S ribosomal subunit.

Functionally, this protein binds to the 23S rRNA, and is important in its secondary structure. It is located near the subunit interface in the base of the L7/L12 stalk, and near the tRNA binding site of the peptidyltransferase center. The polypeptide is Large ribosomal subunit protein uL6 (Shewanella amazonensis (strain ATCC BAA-1098 / SB2B)).